Consider the following 381-residue polypeptide: Erythronate-4-phosphate dehydrogenase (381 aa).

2 residues coordinate substrate: S45 and T67. NAD(+)-binding positions include 127 to 128 (QV), D147, and T176. R209 is an active-site residue. Residue D233 participates in NAD(+) binding. The active site involves E238. The Proton donor role is filled by H255. G258 contacts NAD(+). Y259 contributes to the substrate binding site.

The protein belongs to the D-isomer specific 2-hydroxyacid dehydrogenase family. PdxB subfamily. Homodimer.

The protein resides in the cytoplasm. The catalysed reaction is 4-phospho-D-erythronate + NAD(+) = (R)-3-hydroxy-2-oxo-4-phosphooxybutanoate + NADH + H(+). Its pathway is cofactor biosynthesis; pyridoxine 5'-phosphate biosynthesis; pyridoxine 5'-phosphate from D-erythrose 4-phosphate: step 2/5. In terms of biological role, catalyzes the oxidation of erythronate-4-phosphate to 3-hydroxy-2-oxo-4-phosphonooxybutanoate. The chain is Erythronate-4-phosphate dehydrogenase from Vibrio cholerae serotype O1 (strain ATCC 39315 / El Tor Inaba N16961).